The chain runs to 261 residues: Hemin import ATP-binding protein HmuV (261 aa).

Residues 7–243 (LRGQNLSLQF…EIIDAVYGYK (237 aa)) form the ABC transporter domain. 39–46 (GPNGAGKS) provides a ligand contact to ATP.

It belongs to the ABC transporter superfamily. Heme (hemin) importer (TC 3.A.1.14.5) family. The complex is composed of two ATP-binding proteins (HmuV), two transmembrane proteins (HmuU) and a solute-binding protein (HmuT).

The protein localises to the cell inner membrane. Its function is as follows. Part of the ABC transporter complex HmuTUV involved in hemin import. Responsible for energy coupling to the transport system. The polypeptide is Hemin import ATP-binding protein HmuV (Vibrio vulnificus (strain CMCP6)).